We begin with the raw amino-acid sequence, 972 residues long: Translation initiation factor IF-2 (972 aa).

A compositionally biased stretch (basic and acidic residues) spans 49–63; that stretch reads HLRKSHGATDGDKRK. 2 disordered regions span residues 49–86 and 100–383; these read HLRKSHGATDGDKRKITLTRKHTSEIKQSDATGKARTI and DDVA…TFQA. Over residues 105–114 the composition is skewed to low complexity; the sequence is GAEQGQAQVA. The span at 121–177 shows a compositional bias: basic and acidic residues; the sequence is ELKRREEEARREAELLEKQAQELRERQERLEREEAERRAREEAAEAERRRAEEEAAA. Residues 178–209 are compositionally biased toward low complexity; that stretch reads KRAAAAAVEAQQAAAQQAAEAQQETAGAQSAQ. Residues 210–261 show a composition bias toward basic and acidic residues; that stretch reads DEARAAAERAAQREAAKKAEDAAREAADKTRAEQEEIRKRREAAEAEARAIR. The segment covering 277 to 286 has biased composition (pro residues); it reads PPKPVEPPKP. A compositionally biased stretch (low complexity) spans 298-327; it reads KPAGAGAARPAVKKPAGAAPATTQAPAGAG. Gly residues predominate over residues 356–369; the sequence is SSGGVDRGWRGGPK. Positions 472–641 constitute a tr-type G domain; it reads PRPPVVTVMG…LLQAEVLELK (170 aa). The segment at 481-488 is G1; that stretch reads GHVDHGKT. 481–488 provides a ligand contact to GTP; that stretch reads GHVDHGKT. The G2 stretch occupies residues 506–510; the sequence is GITQH. The G3 stretch occupies residues 527–530; it reads DTPG. Residues 527–531 and 581–584 contribute to the GTP site; these read DTPGH and NKID. Residues 581–584 form a G4 region; the sequence is NKID. Positions 617-619 are G5; that stretch reads SAK.

This sequence belongs to the TRAFAC class translation factor GTPase superfamily. Classic translation factor GTPase family. IF-2 subfamily.

The protein localises to the cytoplasm. Its function is as follows. One of the essential components for the initiation of protein synthesis. Protects formylmethionyl-tRNA from spontaneous hydrolysis and promotes its binding to the 30S ribosomal subunits. Also involved in the hydrolysis of GTP during the formation of the 70S ribosomal complex. The polypeptide is Translation initiation factor IF-2 (Burkholderia ambifaria (strain MC40-6)).